Reading from the N-terminus, the 60-residue chain is Large ribosomal subunit protein bL32 (60 aa).

A disordered region spans residues 1–23 (MAVPARHTSKAKKNKRRTHYKLT). Positions 7-20 (HTSKAKKNKRRTHY) are enriched in basic residues.

This sequence belongs to the bacterial ribosomal protein bL32 family.

The protein is Large ribosomal subunit protein bL32 of Streptococcus equi subsp. equi (strain 4047).